The chain runs to 689 residues: DNA-directed RNA polymerase subunit beta' (689 aa).

The Zn(2+) site is built by Cys69, Cys71, Cys87, and Cys90. Residues Asp489, Asp491, and Asp493 each contribute to the Mg(2+) site.

It belongs to the RNA polymerase beta' chain family. RpoC1 subfamily. In terms of assembly, in plastids the minimal PEP RNA polymerase catalytic core is composed of four subunits: alpha, beta, beta', and beta''. When a (nuclear-encoded) sigma factor is associated with the core the holoenzyme is formed, which can initiate transcription. Requires Mg(2+) as cofactor. It depends on Zn(2+) as a cofactor.

Its subcellular location is the plastid. The protein resides in the chloroplast. It carries out the reaction RNA(n) + a ribonucleoside 5'-triphosphate = RNA(n+1) + diphosphate. DNA-dependent RNA polymerase catalyzes the transcription of DNA into RNA using the four ribonucleoside triphosphates as substrates. The polypeptide is DNA-directed RNA polymerase subunit beta' (Lactuca sativa (Garden lettuce)).